Consider the following 146-residue polypeptide: MTFKHIVRIADTDLDGNKSLMFALTGIKGIGLRAARCIVNELGVDGRAKLGELDDETIEKVKKFVEEEIESLPSWLLNRRKDPYSGQDLHLLSKDVDFARMLDIERLIKMKAYRGVRHARGKKVRGQRTRSTGRKGRTVGVVRRKR.

Residues 119–146 are disordered; it reads ARGKKVRGQRTRSTGRKGRTVGVVRRKR.

Belongs to the universal ribosomal protein uS13 family. As to quaternary structure, part of the 30S ribosomal subunit. Forms a loose heterodimer with protein S19. Forms two bridges to the 50S subunit in the 70S ribosome.

In terms of biological role, located at the top of the head of the 30S subunit, it contacts several helices of the 16S rRNA. In the 70S ribosome it contacts the 23S rRNA (bridge B1a) and protein L5 of the 50S subunit (bridge B1b), connecting the 2 subunits; these bridges are implicated in subunit movement. In Archaeoglobus fulgidus (strain ATCC 49558 / DSM 4304 / JCM 9628 / NBRC 100126 / VC-16), this protein is Small ribosomal subunit protein uS13.